The sequence spans 133 residues: DNA-directed RNA polymerase subunit omega (133 aa).

It belongs to the RNA polymerase subunit omega family. The RNAP catalytic core consists of 2 alpha, 1 beta, 1 beta' and 1 omega subunit. When a sigma factor is associated with the core the holoenzyme is formed, which can initiate transcription.

The catalysed reaction is RNA(n) + a ribonucleoside 5'-triphosphate = RNA(n+1) + diphosphate. Its function is as follows. Promotes RNA polymerase assembly. Latches the N- and C-terminal regions of the beta' subunit thereby facilitating its interaction with the beta and alpha subunits. The polypeptide is DNA-directed RNA polymerase subunit omega (Brucella canis (strain ATCC 23365 / NCTC 10854 / RM-666)).